The sequence spans 196 residues: uncharacterized protein (196 aa).

This is an uncharacterized protein from Caenorhabditis elegans.